The primary structure comprises 1117 residues: Isoleucine--tRNA ligase (1117 aa).

The short motif at 64-74 (PFANGLPHYGH) is the 'HIGH' region element. Residues 647–651 (KLSKR) carry the 'KMSKS' region motif. Residue Lys650 participates in ATP binding.

Belongs to the class-I aminoacyl-tRNA synthetase family. IleS type 2 subfamily. Monomer. Requires Zn(2+) as cofactor.

It is found in the cytoplasm. It catalyses the reaction tRNA(Ile) + L-isoleucine + ATP = L-isoleucyl-tRNA(Ile) + AMP + diphosphate. In terms of biological role, catalyzes the attachment of isoleucine to tRNA(Ile). As IleRS can inadvertently accommodate and process structurally similar amino acids such as valine, to avoid such errors it has two additional distinct tRNA(Ile)-dependent editing activities. One activity is designated as 'pretransfer' editing and involves the hydrolysis of activated Val-AMP. The other activity is designated 'posttransfer' editing and involves deacylation of mischarged Val-tRNA(Ile). This chain is Isoleucine--tRNA ligase, found in Ehrlichia ruminantium (strain Welgevonden).